Reading from the N-terminus, the 423-residue chain is Serine--tRNA ligase (423 aa).

229 to 231 is a binding site for L-serine; sequence TAE. 260–262 is a binding site for ATP; it reads RKE. Glutamate 283 is a binding site for L-serine. 347–350 contacts ATP; sequence EISS. Serine 383 contributes to the L-serine binding site.

Belongs to the class-II aminoacyl-tRNA synthetase family. Type-1 seryl-tRNA synthetase subfamily. Homodimer. The tRNA molecule binds across the dimer.

It localises to the cytoplasm. It catalyses the reaction tRNA(Ser) + L-serine + ATP = L-seryl-tRNA(Ser) + AMP + diphosphate + H(+). It carries out the reaction tRNA(Sec) + L-serine + ATP = L-seryl-tRNA(Sec) + AMP + diphosphate + H(+). It participates in aminoacyl-tRNA biosynthesis; selenocysteinyl-tRNA(Sec) biosynthesis; L-seryl-tRNA(Sec) from L-serine and tRNA(Sec): step 1/1. Its function is as follows. Catalyzes the attachment of serine to tRNA(Ser). Is also able to aminoacylate tRNA(Sec) with serine, to form the misacylated tRNA L-seryl-tRNA(Sec), which will be further converted into selenocysteinyl-tRNA(Sec). This is Serine--tRNA ligase from Syntrophotalea carbinolica (strain DSM 2380 / NBRC 103641 / GraBd1) (Pelobacter carbinolicus).